A 330-amino-acid chain; its full sequence is Trans-1,2-dihydrobenzene-1,2-diol dehydrogenase (330 aa).

Belongs to the Gfo/Idh/MocA family. In terms of assembly, homodimer.

It carries out the reaction (1R,2R)-1,2-dihydrobenzene-1,2-diol + NADP(+) = catechol + NADPH + H(+). The enzyme catalyses D-xylose + NADP(+) = D-xylono-1,5-lactone + NADPH + H(+). The sequence is that of Trans-1,2-dihydrobenzene-1,2-diol dehydrogenase (dhdh) from Xenopus laevis (African clawed frog).